The sequence spans 273 residues: NH(3)-dependent NAD(+) synthetase (273 aa).

47 to 54 (GISGGQDS) is a binding site for ATP. Aspartate 53 contributes to the Mg(2+) binding site. Arginine 139 contributes to the deamido-NAD(+) binding site. Threonine 159 serves as a coordination point for ATP. Position 164 (glutamate 164) interacts with Mg(2+). Positions 172 and 179 each coordinate deamido-NAD(+). ATP contacts are provided by lysine 188 and threonine 210. 259–260 (HK) lines the deamido-NAD(+) pocket.

Belongs to the NAD synthetase family. In terms of assembly, homodimer.

It carries out the reaction deamido-NAD(+) + NH4(+) + ATP = AMP + diphosphate + NAD(+) + H(+). The protein operates within cofactor biosynthesis; NAD(+) biosynthesis; NAD(+) from deamido-NAD(+) (ammonia route): step 1/1. Catalyzes the ATP-dependent amidation of deamido-NAD to form NAD. Uses ammonia as a nitrogen source. This Staphylococcus haemolyticus (strain JCSC1435) protein is NH(3)-dependent NAD(+) synthetase.